Consider the following 67-residue polypeptide: Coiled-coil domain-containing protein 179 (67 aa).

Disordered stretches follow at residues 1–32 (MCLRVKDEEPAQVYPEGPRRHHPSDVSTRQSV) and 47–67 (RKLGKRFARPNPIPDTGILWT). A coiled-coil region spans residues 27–53 (STRQSVEKRINYMQNLQKEKRKLGKRF).

The protein is Coiled-coil domain-containing protein 179 (Ccdc179) of Mus musculus (Mouse).